The sequence spans 417 residues: D-galactonate dehydratase family member Dd703_0947 (417 aa).

A substrate-binding site is contributed by H127. Catalysis depends on Y158, which acts as the Proton donor/acceptor. D223 is a Mg(2+) binding site. H225 functions as the Proton donor/acceptor in the catalytic mechanism. Residues E249 and E275 each coordinate Mg(2+). 5 residues coordinate substrate: E275, R296, H325, D329, and E352.

Belongs to the mandelate racemase/muconate lactonizing enzyme family. GalD subfamily. Mg(2+) is required as a cofactor.

The catalysed reaction is D-mannonate = 2-dehydro-3-deoxy-D-gluconate + H2O. The enzyme catalyses D-gluconate = 2-dehydro-3-deoxy-D-gluconate + H2O. Has low dehydratase activity with D-mannonate and D-gluconate, suggesting that these are not physiological substrates and that it has no significant role in the in vivo degradation of these compounds. Has no detectable activity with a panel of 70 other acid sugars (in vitro). The chain is D-galactonate dehydratase family member Dd703_0947 from Musicola paradisiaca (strain Ech703) (Dickeya paradisiaca).